Reading from the N-terminus, the 384-residue chain is S-adenosylmethionine synthase (384 aa).

Residue histidine 15 coordinates ATP. Aspartate 17 serves as a coordination point for Mg(2+). Glutamate 43 is a K(+) binding site. Glutamate 56 and glutamine 99 together coordinate L-methionine. The flexible loop stretch occupies residues 99–109 (QSPDINQGVDR). ATP is bound by residues 164–166 (DAK), 230–231 (RF), aspartate 239, 245–246 (RK), alanine 262, and lysine 266. Position 239 (aspartate 239) interacts with L-methionine. Residue lysine 270 coordinates L-methionine.

Belongs to the AdoMet synthase family. Homotetramer; dimer of dimers. It depends on Mg(2+) as a cofactor. K(+) serves as cofactor.

The protein resides in the cytoplasm. The catalysed reaction is L-methionine + ATP + H2O = S-adenosyl-L-methionine + phosphate + diphosphate. It functions in the pathway amino-acid biosynthesis; S-adenosyl-L-methionine biosynthesis; S-adenosyl-L-methionine from L-methionine: step 1/1. Functionally, catalyzes the formation of S-adenosylmethionine (AdoMet) from methionine and ATP. The overall synthetic reaction is composed of two sequential steps, AdoMet formation and the subsequent tripolyphosphate hydrolysis which occurs prior to release of AdoMet from the enzyme. The protein is S-adenosylmethionine synthase of Salmonella gallinarum (strain 287/91 / NCTC 13346).